We begin with the raw amino-acid sequence, 302 residues long: Putative fructose-bisphosphate aldolase (302 aa).

The active-site Proton donor is the Asp86. 4 residues coordinate Zn(2+): His87, Asp116, Glu146, and His192. A dihydroxyacetone phosphate-binding site is contributed by Gly193. A Zn(2+)-binding site is contributed by His223. Dihydroxyacetone phosphate is bound by residues 224 to 226 (GAD) and 245 to 248 (NVNR).

It belongs to the class II fructose-bisphosphate aldolase family. As to quaternary structure, homodimer. It depends on Zn(2+) as a cofactor.

It carries out the reaction beta-D-fructose 1,6-bisphosphate = D-glyceraldehyde 3-phosphate + dihydroxyacetone phosphate. Its pathway is carbohydrate degradation; glycolysis; D-glyceraldehyde 3-phosphate and glycerone phosphate from D-glucose: step 4/4. In terms of biological role, catalyzes the aldol condensation of dihydroxyacetone phosphate (DHAP or glycerone-phosphate) with glyceraldehyde 3-phosphate (G3P) to form fructose 1,6-bisphosphate (FBP) in gluconeogenesis and the reverse reaction in glycolysis. This Coccidioides immitis (strain RS) (Valley fever fungus) protein is Putative fructose-bisphosphate aldolase.